The sequence spans 741 residues: Protein ACCUMULATION AND REPLICATION OF CHLOROPLASTS 3, chloroplastic (741 aa).

A chloroplast-targeting transit peptide spans 1 to 41 (MPISMELPVFSTLRVPLFSRLALLPTFGVPFSSLGATTRLN). 2 disordered regions span residues 444–465 (ENGDDSEYPLKEGEPSRNSRLD) and 539–558 (DSREESFFNPNGSTKDSSDT). The span at 451–465 (YPLKEGEPSRNSRLD) shows a compositional bias: basic and acidic residues. Residues 546-558 (FNPNGSTKDSSDT) show a composition bias toward polar residues. 3 MORN repeats span residues 612–628 (QGGLPEGKGRLVLGDGS), 630–652 (YDGMWHNGKRSGLGTFYFKNGDV), and 653–675 (FQGTWREDLIHGKGWFYFHKGDR).

As to quaternary structure, self-interacts. Interacts with FTSZ, CDP1/PARC6 (via N-terminus), MIND1 and MINE1. Part of a complex made of ARC3, ARC6, FTSZ1 and FTSZ2. Recruited to the middle of the plastid by CDP1/PARC6 where subsequent complex made of CDP1/PARC6, ARC3 and FtsZ proteins can form; this complex enhances the dynamics of Z rings during chloroplast division. Binding to FTSZ2-1 is enabled by ARC6.

Its subcellular location is the plastid. It localises to the chloroplast outer membrane. The protein resides in the chloroplast stroma. Its function is as follows. Together with MIND1 and MCD1, regulates FtsZ ring positioning in chloroplasts in an ARC6-dependent manner. Z-ring accessory protein involved in the initiation of plastid division and division site placement (might functionally replace bacterial MinC). Acts as a disassembly factor that accelerates fragmentation and depolymerization of existing FtsZ2 filaments by enhancing FTSZ2 GTPase activity, thus leading to the conversion of FTSZ2 bound GTP into GDP, a process which triggers FtsZ2 filaments destabilization. Prevents misplaced Z-ring formation at chloroplast stroma nondivision sites. May control the rate of chloroplast expansion. Seems to influence stromule (stroma-filled tubular extensions of the plastid envelope membrane) length and frequency. This chain is Protein ACCUMULATION AND REPLICATION OF CHLOROPLASTS 3, chloroplastic, found in Arabidopsis thaliana (Mouse-ear cress).